The sequence spans 182 residues: Orotate phosphoribosyltransferase (182 aa).

Residues arginine 91, lysine 92, lysine 95, histidine 97, and 117-125 contribute to the 5-phospho-alpha-D-ribose 1-diphosphate site; that span reads EDVTTTGGS. Threonine 121 and arginine 149 together coordinate orotate.

This sequence belongs to the purine/pyrimidine phosphoribosyltransferase family. PyrE subfamily. Homodimer. Requires Mg(2+) as cofactor.

The enzyme catalyses orotidine 5'-phosphate + diphosphate = orotate + 5-phospho-alpha-D-ribose 1-diphosphate. The protein operates within pyrimidine metabolism; UMP biosynthesis via de novo pathway; UMP from orotate: step 1/2. Functionally, catalyzes the transfer of a ribosyl phosphate group from 5-phosphoribose 1-diphosphate to orotate, leading to the formation of orotidine monophosphate (OMP). The chain is Orotate phosphoribosyltransferase from Pyrococcus abyssi (strain GE5 / Orsay).